A 393-amino-acid chain; its full sequence is Formate-dependent phosphoribosylglycinamide formyltransferase (393 aa).

Residues 22-23 (EL) and glutamate 82 each bind N(1)-(5-phospho-beta-D-ribosyl)glycinamide. ATP is bound by residues arginine 114, lysine 155, 160-165 (SSGHGQ), 195-198 (EGFI), and glutamate 203. One can recognise an ATP-grasp domain in the interval 119 to 308 (RLAAEELGLP…QFALHARAIL (190 aa)). Mg(2+) is bound by residues glutamate 267 and glutamate 279. Residues aspartate 286, lysine 356, and 363 to 364 (RR) each bind N(1)-(5-phospho-beta-D-ribosyl)glycinamide.

It belongs to the PurK/PurT family. Homodimer.

The catalysed reaction is N(1)-(5-phospho-beta-D-ribosyl)glycinamide + formate + ATP = N(2)-formyl-N(1)-(5-phospho-beta-D-ribosyl)glycinamide + ADP + phosphate + H(+). It participates in purine metabolism; IMP biosynthesis via de novo pathway; N(2)-formyl-N(1)-(5-phospho-D-ribosyl)glycinamide from N(1)-(5-phospho-D-ribosyl)glycinamide (formate route): step 1/1. Its function is as follows. Involved in the de novo purine biosynthesis. Catalyzes the transfer of formate to 5-phospho-ribosyl-glycinamide (GAR), producing 5-phospho-ribosyl-N-formylglycinamide (FGAR). Formate is provided by PurU via hydrolysis of 10-formyl-tetrahydrofolate. This chain is Formate-dependent phosphoribosylglycinamide formyltransferase, found in Haemophilus ducreyi (strain 35000HP / ATCC 700724).